The sequence spans 871 residues: Pentatricopeptide repeat-containing protein At3g06920 (871 aa).

PPR repeat units lie at residues Cys97–Pro131, Ser132–Pro166, Ala167–Pro201, Thr202–Ala236, Asp237–Pro271, Asp272–Pro306, Cys307–Pro341, Ser342–Asp372, Asn376–Pro410, Asn411–Pro445, Asp446–Thr480, Asn481–Pro515, Asp516–Pro550, Asp551–Leu585, Asp586–Pro620, Thr621–Leu655, Asn656–Pro690, Asn691–Pro725, Asn726–Pro760, Ser761–Pro795, and Asp796–Ile830.

The protein belongs to the PPR family. P subfamily.

In Arabidopsis thaliana (Mouse-ear cress), this protein is Pentatricopeptide repeat-containing protein At3g06920.